Reading from the N-terminus, the 806-residue chain is Plasminogen (806 aa).

An N-terminal signal peptide occupies residues 1–19 (MEYGKVIFLFLLFLKSGQG). The PAN domain maps to 20 to 98 (ESLENYIKTE…RDVVLFEKRI (79 aa)). Cystine bridges form between Cys49-Cys73, Cys53-Cys61, Cys103-Cys181, Cys124-Cys164, Cys152-Cys176, Cys185-Cys262, Cys188-Cys316, Cys206-Cys245, Cys234-Cys257, Cys275-Cys352, Cys296-Cys335, Cys324-Cys347, Cys371-Cys448, Cys392-Cys431, Cys420-Cys443, Cys476-Cys555, Cys497-Cys538, Cys526-Cys550, Cys563-Cys681, Cys573-Cys581, and Cys603-Cys619. Kringle domains lie at 102–181 (DCKS…VPEC), 184–262 (ECMH…IPRC), 274–352 (QCLK…IPSC), 370–448 (ECYE…LEKC), and 475–555 (DCMY…IPQC). Residues 577 to 804 (IVGGCYAQPH…YISWIEDVMK (228 aa)) enclose the Peptidase S1 domain. Ser593 carries the phosphoserine modification. Residues His618 and Asp661 each act as charge relay system in the active site. At Ser684 the chain carries Phosphoserine. Cystine bridges form between Cys695–Cys762, Cys725–Cys741, and Cys752–Cys780. Catalysis depends on Ser756, which acts as the Charge relay system.

Belongs to the peptidase S1 family. Plasminogen subfamily. Interacts with CSPG4 and AMOT. Interacts (via the Kringle domains) with HRG; the interaction tethers PLG to the cell surface and enhances its activation. Interacts (via Kringle 4 domain) with ADA; the interaction stimulates PLG activation when in complex with DPP4. Angiostatin: Interacts with ATP5F1A; the interaction inhibits most of the angiogenic effects of angiostatin. In the presence of the inhibitor, the activation involves only cleavage after Arg-576, yielding two chains held together by two disulfide bonds. In the absence of the inhibitor, the activation involves additionally the removal of the activation peptide.

It is found in the secreted. It catalyses the reaction Preferential cleavage: Lys-|-Xaa &gt; Arg-|-Xaa, higher selectivity than trypsin. Converts fibrin into soluble products.. Converted into plasmin by plasminogen activators, both plasminogen and its activator being bound to fibrin. Activated with catalytic amounts of streptokinase. Functionally, plasmin dissolves the fibrin of blood clots and acts as a proteolytic factor in a variety of other processes including embryonic development, tissue remodeling, tumor invasion, and inflammation. In ovulation, weakens the walls of the Graafian follicle. It activates the urokinase-type plasminogen activator, collagenases and several complement zymogens, such as C1, C4 and C5. Cleavage of fibronectin and laminin leads to cell detachment and apoptosis. Also cleaves fibrin, thrombospondin and von Willebrand factor. Its role in tissue remodeling and tumor invasion may be modulated by CSPG4. Binds to cells. This is Plasminogen (PLG) from Notamacropus eugenii (Tammar wallaby).